A 1124-amino-acid chain; its full sequence is Probable leucine-rich repeat receptor-like protein kinase At2g33170 (1124 aa).

The first 32 residues, methionine 1–serine 32, serve as a signal peptide directing secretion. Residues leucine 33 to arginine 752 lie on the Extracellular side of the membrane. Asparagine 72, asparagine 96, and asparagine 131 each carry an N-linked (GlcNAc...) asparagine glycan. LRR repeat units lie at residues valine 86–valine 109, asparagine 110–cysteine 132, lysine 134–leucine 156, glutamine 158–leucine 180, asparagine 182–asparagine 205, lysine 206–cysteine 228, asparagine 230–leucine 252, lysine 254–threonine 277, serine 278–methionine 300, serine 302–serine 325, lysine 326–isoleucine 348, glutamate 350–lysine 371, asparagine 374–threonine 397, serine 398–tyrosine 420, proline 422–glutamine 444, asparagine 446–cysteine 468, serine 470–lysine 491, asparagine 494–cysteine 516, lysine 518–leucine 540, asparagine 542–cysteine 564, methionine 566–leucine 588, glutamine 590–threonine 613, histidine 614–leucine 636, serine 638–leucine 661, leucine 663–serine 686, and serine 687–glutamine 709. An N-linked (GlcNAc...) asparagine glycan is attached at asparagine 192. N-linked (GlcNAc...) asparagine glycosylation occurs at asparagine 275. Residue asparagine 314 is glycosylated (N-linked (GlcNAc...) asparagine). Residue asparagine 395 is glycosylated (N-linked (GlcNAc...) asparagine). Asparagine 494 is a glycosylation site (N-linked (GlcNAc...) asparagine). Residue asparagine 547 is glycosylated (N-linked (GlcNAc...) asparagine). Asparagine 611 carries N-linked (GlcNAc...) asparagine glycosylation. 5 N-linked (GlcNAc...) asparagine glycosylation sites follow: asparagine 644, asparagine 684, asparagine 692, asparagine 697, and asparagine 710. The chain crosses the membrane as a helical span at residues isoleucine 753–valine 773. Topologically, residues histidine 774–proline 1124 are cytoplasmic. Threonine 808 and threonine 816 each carry phosphothreonine. The region spanning phenylalanine 819–isoleucine 1100 is the Protein kinase domain. ATP is bound by residues valine 825–valine 833 and lysine 847. Tyrosine 901 and tyrosine 939 each carry phosphotyrosine. Aspartate 952 acts as the Proton acceptor in catalysis. The residue at position 986 (serine 986) is a Phosphoserine. Tyrosine 994 and tyrosine 1001 each carry phosphotyrosine. Threonine 1002 is subject to Phosphothreonine.

This sequence belongs to the protein kinase superfamily. Ser/Thr protein kinase family.

Its subcellular location is the membrane. The enzyme catalyses L-seryl-[protein] + ATP = O-phospho-L-seryl-[protein] + ADP + H(+). It catalyses the reaction L-threonyl-[protein] + ATP = O-phospho-L-threonyl-[protein] + ADP + H(+). In Arabidopsis thaliana (Mouse-ear cress), this protein is Probable leucine-rich repeat receptor-like protein kinase At2g33170.